Consider the following 121-residue polypeptide: Splicing factor 3B subunit 6 (121 aa).

The interval Glu-12 to Lys-25 is interaction with pre-mRNA branch site. The region spanning Arg-15–Ser-90 is the RRM domain.

It belongs to the SF3B6 family. In terms of assembly, component of splicing factor SF3B complex. Component of the U11/U12 snRNPs that are part of the U12-type spliceosome.

The protein localises to the nucleus. Involved in pre-mRNA splicing as a component of the splicing factor SF3B complex. SF3B complex is required for 'A' complex assembly formed by the stable binding of U2 snRNP to the branchpoint sequence (BPS) in pre-mRNA. Directly contacts the pre-mRNA branch site adenosine for the first catalytic step of splicing. Enters the spliceosome and associates with the pre-mRNA branch site as part of the 17S U2 or, in the case of the minor spliceosome, as part of the 18S U11/U12 snRNP complex, and thus may facilitate the interaction of these snRNP with the branch sites of U2 and U12 respectively. The chain is Splicing factor 3B subunit 6 from Drosophila melanogaster (Fruit fly).